Consider the following 540-residue polypeptide: T-complex protein 1 subunit alpha (540 aa).

This sequence belongs to the TCP-1 chaperonin family. As to quaternary structure, component of the T-complex protein 1 (TCP1) complex.

The protein localises to the cytoplasm. Functionally, molecular chaperone; assists the folding of proteins upon ATP hydrolysis. This chain is T-complex protein 1 subunit alpha (TCP1), found in Encephalitozoon cuniculi (strain GB-M1) (Microsporidian parasite).